The sequence spans 312 residues: Porphobilinogen deaminase (312 aa).

Residue C243 is modified to S-(dipyrrolylmethanemethyl)cysteine.

It belongs to the HMBS family. Monomer. Dipyrromethane serves as cofactor.

The catalysed reaction is 4 porphobilinogen + H2O = hydroxymethylbilane + 4 NH4(+). Its pathway is porphyrin-containing compound metabolism; protoporphyrin-IX biosynthesis; coproporphyrinogen-III from 5-aminolevulinate: step 2/4. Tetrapolymerization of the monopyrrole PBG into the hydroxymethylbilane pre-uroporphyrinogen in several discrete steps. In Vibrio vulnificus (strain CMCP6), this protein is Porphobilinogen deaminase.